The chain runs to 156 residues: Sec-independent protein translocase protein TatB (156 aa).

The chain crosses the membrane as a helical span at residues 2–22 (FSSVGWGEIFLLVVVGLVVIG). The segment at 100-156 (KIMAEGTEGEAQRNKQAADNNANVVERPADGSTARPTQNDPKDGPNYSGGVSWTDII) is disordered. Residues 113-122 (NKQAADNNAN) are compositionally biased toward polar residues.

The protein belongs to the TatB family. The Tat system comprises two distinct complexes: a TatABC complex, containing multiple copies of TatA, TatB and TatC subunits, and a separate TatA complex, containing only TatA subunits. Substrates initially bind to the TatABC complex, which probably triggers association of the separate TatA complex to form the active translocon.

The protein localises to the cell membrane. Functionally, part of the twin-arginine translocation (Tat) system that transports large folded proteins containing a characteristic twin-arginine motif in their signal peptide across membranes. Together with TatC, TatB is part of a receptor directly interacting with Tat signal peptides. TatB may form an oligomeric binding site that transiently accommodates folded Tat precursor proteins before their translocation. This chain is Sec-independent protein translocase protein TatB, found in Corynebacterium glutamicum (strain ATCC 13032 / DSM 20300 / JCM 1318 / BCRC 11384 / CCUG 27702 / LMG 3730 / NBRC 12168 / NCIMB 10025 / NRRL B-2784 / 534).